A 60-amino-acid chain; its full sequence is DNA-directed RNA polymerase subunit Rpo6 (60 aa).

This sequence belongs to the archaeal Rpo6/eukaryotic RPB6 RNA polymerase subunit family. In terms of assembly, part of the RNA polymerase complex.

The protein resides in the cytoplasm. The catalysed reaction is RNA(n) + a ribonucleoside 5'-triphosphate = RNA(n+1) + diphosphate. In terms of biological role, DNA-dependent RNA polymerase (RNAP) catalyzes the transcription of DNA into RNA using the four ribonucleoside triphosphates as substrates. The polypeptide is DNA-directed RNA polymerase subunit Rpo6 (Methanothrix thermoacetophila (strain DSM 6194 / JCM 14653 / NBRC 101360 / PT) (Methanosaeta thermophila)).